Consider the following 319-residue polypeptide: L-lactate dehydrogenase (319 aa).

Residues Val11, Asp32, Arg37, Tyr62, and Gly76 to Val77 each bind NAD(+). Residues Gln79, Arg85, and Asn117–Asp120 each bind substrate. NAD(+)-binding positions include Val115–Asn117 and Ser140. Asp145–Arg148 is a substrate binding site. The beta-D-fructose 1,6-bisphosphate site is built by Arg150 and His165. The active-site Proton acceptor is the His172. The residue at position 217 (Tyr217) is a Phosphotyrosine. Substrate is bound at residue Thr226.

Belongs to the LDH/MDH superfamily. LDH family. In terms of assembly, homotetramer.

It localises to the cytoplasm. It carries out the reaction (S)-lactate + NAD(+) = pyruvate + NADH + H(+). It functions in the pathway fermentation; pyruvate fermentation to lactate; (S)-lactate from pyruvate: step 1/1. Allosterically activated by fructose 1,6-bisphosphate (FBP). Its function is as follows. Catalyzes the conversion of lactate to pyruvate. The protein is L-lactate dehydrogenase of Thermotoga sp. (strain RQ2).